The primary structure comprises 477 residues: ETS translocation variant 1 (477 aa).

Residue serine 94 is modified to Phosphoserine. Residues 128 to 178 (PQVGMRPSNPPTPSSTPVSPLHHASPNSAHTSKPDRAFPAHLPPSQPIQDS) form a disordered region. 2 positions are modified to phosphoserine; by RPS6KA1 and RPS6KA5: serine 191 and serine 216. Lysine 317 is covalently cross-linked (Glycyl lysine isopeptide (Lys-Gly) (interchain with G-Cter in SUMO2)). Residues 335–415 (LQLWQFLVAL…AGERYVYKFV (81 aa)) constitute a DNA-binding region (ETS).

It belongs to the ETS family. Post-translationally, sumoylated. In terms of processing, phosphorylated at Ser-191 and Ser-216 by RPS6KA1 and RPS6KA5; phosphorylation activates transcriptional activity.

The protein resides in the nucleus. Transcriptional activator that binds to DNA sequences containing the consensus pentanucleotide 5'-CGGA[AT]-3'. Required for olfactory dopaminergic neuron differentiation; may directly activate expression of tyrosine hydroxylase (TH). The chain is ETS translocation variant 1 (ETV1) from Bos taurus (Bovine).